We begin with the raw amino-acid sequence, 257 residues long: 4-hydroxy-tetrahydrodipicolinate reductase (257 aa).

NAD(+)-binding positions include G11 to M16 and E37. Residue R38 coordinates NADP(+). Residues G86–T88 and S110–Y113 each bind NAD(+). The Proton donor/acceptor role is filled by H144. H145 is a (S)-2,3,4,5-tetrahydrodipicolinate binding site. K148 (proton donor) is an active-site residue. (S)-2,3,4,5-tetrahydrodipicolinate is bound at residue G154–T155.

This sequence belongs to the DapB family.

The protein resides in the cytoplasm. It catalyses the reaction (S)-2,3,4,5-tetrahydrodipicolinate + NAD(+) + H2O = (2S,4S)-4-hydroxy-2,3,4,5-tetrahydrodipicolinate + NADH + H(+). The enzyme catalyses (S)-2,3,4,5-tetrahydrodipicolinate + NADP(+) + H2O = (2S,4S)-4-hydroxy-2,3,4,5-tetrahydrodipicolinate + NADPH + H(+). Its pathway is amino-acid biosynthesis; L-lysine biosynthesis via DAP pathway; (S)-tetrahydrodipicolinate from L-aspartate: step 4/4. Catalyzes the conversion of 4-hydroxy-tetrahydrodipicolinate (HTPA) to tetrahydrodipicolinate. The protein is 4-hydroxy-tetrahydrodipicolinate reductase of Caulobacter vibrioides (strain ATCC 19089 / CIP 103742 / CB 15) (Caulobacter crescentus).